A 343-amino-acid chain; its full sequence is Mitotic checkpoint protein bub-3 (343 aa).

WD repeat units follow at residues 21 to 62 (PPFV…DISE), 67 to 105 (THGKPLLTCTFAGYNKVAFGGVDHNVKLADIETGNGTQL), 107 to 146 (SHALAVRCMEFNPMSSLIVSGGWDSSVKLWDARSYGNGAI), 150 to 187 (NVSSSVYAMDVLKHTILVGTKDRKIFMYDSRKLREPLQ), 192 to 232 (PLKY…EMMK), 249 to 288 (ELIHPVHTVAFHPKYGTFATGGADGIVNIWDPFNRKRIIQ), and 291 to 331 (KFET…NSIT). Residues 322-343 (PSPLPNNSITIRHITDPESRPK) form a disordered region. Residues 334 to 343 (HITDPESRPK) are compositionally biased toward basic and acidic residues.

This sequence belongs to the WD repeat BUB3 family. May interact with bub-1; for localization at the kinetochore and the onset of anaphase.

Its subcellular location is the chromosome. It localises to the centromere. The protein resides in the kinetochore. It is found in the nucleus. In terms of biological role, has a dual function in spindle-assembly checkpoint signaling and in promoting the establishment of correct kinetochore-microtubule (K-MT) attachments. Promotes the formation of stable end-on bipolar attachments of chromosomes. Necessary for expression and kinetochore localization of bub-1. Plays a role in synapsis checkpoint signaling inducing apoptosis in response to unsynapsed chromosomes and thus controlling chromosomal segregation during oocyte meiosis. This chain is Mitotic checkpoint protein bub-3, found in Caenorhabditis elegans.